The sequence spans 157 residues: Major allergen Alt a 1 (157 aa).

Residues 1 to 18 (MQFTTIASLFAAAGLAAA) form the signal peptide. The 119-residue stretch at 35–153 (EGDYVWKISE…ADAYITLVTL (119 aa)) folds into the AA1-like domain. 2 cysteine pairs are disulfide-bonded: C74-C89 and C128-C140.

Belongs to the ALTA1 family. As to quaternary structure, homodimer; disulfide-linked.

Its subcellular location is the spore wall. The protein localises to the secreted. Functionally, may bind and inhibit the beta-glucanase activity of host plant thaumatin-like proteins. This is Major allergen Alt a 1 (ALTA1) from Alternaria alternata (Alternaria rot fungus).